A 197-amino-acid chain; its full sequence is Proteasome subunit beta 1 (197 aa).

Residues 1 to 6 constitute a propeptide, removed in mature form; by autocatalysis; sequence MNRKTG. Threonine 7 (nucleophile) is an active-site residue.

It belongs to the peptidase T1B family. The 20S proteasome core is composed of 14 alpha and 14 beta subunits that assemble into four stacked heptameric rings, resulting in a barrel-shaped structure. The two inner rings, each composed of seven catalytic beta subunits, are sandwiched by two outer rings, each composed of seven alpha subunits. The catalytic chamber with the active sites is on the inside of the barrel. Has a gated structure, the ends of the cylinder being occluded by the N-termini of the alpha-subunits. Is capped at one or both ends by the proteasome regulatory ATPase, PAN.

Its subcellular location is the cytoplasm. It carries out the reaction Cleavage of peptide bonds with very broad specificity.. Its activity is regulated as follows. The formation of the proteasomal ATPase PAN-20S proteasome complex, via the docking of the C-termini of PAN into the intersubunit pockets in the alpha-rings, triggers opening of the gate for substrate entry. Interconversion between the open-gate and close-gate conformations leads to a dynamic regulation of the 20S proteasome proteolysis activity. Component of the proteasome core, a large protease complex with broad specificity involved in protein degradation. The sequence is that of Proteasome subunit beta 1 from Pyrococcus horikoshii (strain ATCC 700860 / DSM 12428 / JCM 9974 / NBRC 100139 / OT-3).